A 279-amino-acid polypeptide reads, in one-letter code: Putative pyruvate, phosphate dikinase regulatory protein (279 aa).

153-160 (GVSRTSKT) contacts ADP.

It belongs to the pyruvate, phosphate/water dikinase regulatory protein family. PDRP subfamily.

It catalyses the reaction N(tele)-phospho-L-histidyl/L-threonyl-[pyruvate, phosphate dikinase] + ADP = N(tele)-phospho-L-histidyl/O-phospho-L-threonyl-[pyruvate, phosphate dikinase] + AMP + H(+). The enzyme catalyses N(tele)-phospho-L-histidyl/O-phospho-L-threonyl-[pyruvate, phosphate dikinase] + phosphate + H(+) = N(tele)-phospho-L-histidyl/L-threonyl-[pyruvate, phosphate dikinase] + diphosphate. Its function is as follows. Bifunctional serine/threonine kinase and phosphorylase involved in the regulation of the pyruvate, phosphate dikinase (PPDK) by catalyzing its phosphorylation/dephosphorylation. The polypeptide is Putative pyruvate, phosphate dikinase regulatory protein (Rhodopseudomonas palustris (strain ATCC BAA-98 / CGA009)).